The chain runs to 422 residues: G2/mitotic-specific cyclin-A (422 aa).

The interval 1–29 (MSQPFALHHDGENQMQRRGKMNTRSNGLS) is disordered.

Belongs to the cyclin family. Cyclin AB subfamily.

Its function is as follows. Essential for the control of the cell cycle at the G2/M (mitosis) transition. Interacts with the CDC2 and CDK2 protein kinases to form MPF. G2/M cyclins accumulate steadily during G2 and are abruptly destroyed at mitosis. This is G2/mitotic-specific cyclin-A from Spisula solidissima (Atlantic surf-clam).